Consider the following 295-residue polypeptide: Diaminopimelate epimerase (295 aa).

The substrate site is built by N13, Q46, and N66. The Proton donor role is filled by C75. Substrate-binding positions include 76–77, N162, N195, and 213–214; these read GN and ER. C222 functions as the Proton acceptor in the catalytic mechanism. Position 223–224 (223–224) interacts with substrate; it reads GT.

The protein belongs to the diaminopimelate epimerase family. Homodimer.

It localises to the cytoplasm. The catalysed reaction is (2S,6S)-2,6-diaminopimelate = meso-2,6-diaminopimelate. It functions in the pathway amino-acid biosynthesis; L-lysine biosynthesis via DAP pathway; DL-2,6-diaminopimelate from LL-2,6-diaminopimelate: step 1/1. Its function is as follows. Catalyzes the stereoinversion of LL-2,6-diaminopimelate (L,L-DAP) to meso-diaminopimelate (meso-DAP), a precursor of L-lysine and an essential component of the bacterial peptidoglycan. The polypeptide is Diaminopimelate epimerase (Psychrobacter arcticus (strain DSM 17307 / VKM B-2377 / 273-4)).